The following is a 233-amino-acid chain: UPF0725 protein At4g17990 (233 aa).

Belongs to the UPF0725 (EMB2204) family.

The polypeptide is UPF0725 protein At4g17990 (Arabidopsis thaliana (Mouse-ear cress)).